Consider the following 175-residue polypeptide: Urease accessory protein UreE (175 aa).

Positions 151-175 (GGAYGGSPSHAHRHSHVHSHSHETP) are disordered. Residues 160-169 (HAHRHSHVHS) show a composition bias toward basic residues.

Belongs to the UreE family.

Its subcellular location is the cytoplasm. Involved in urease metallocenter assembly. Binds nickel. Probably functions as a nickel donor during metallocenter assembly. This is Urease accessory protein UreE from Synechococcus sp. (strain WH7805).